Here is a 600-residue protein sequence, read N- to C-terminus: Dihydroxy-acid dehydratase (600 aa).

A Mg(2+)-binding site is contributed by Asp82. [2Fe-2S] cluster is bound at residue Cys123. The Mg(2+) site is built by Asp124 and Lys125. N6-carboxylysine is present on Lys125. Position 192 (Cys192) interacts with [2Fe-2S] cluster. Residue Glu489 participates in Mg(2+) binding. Ser515 functions as the Proton acceptor in the catalytic mechanism.

Belongs to the IlvD/Edd family. In terms of assembly, homodimer. Requires [2Fe-2S] cluster as cofactor. The cofactor is Mg(2+).

It carries out the reaction (2R)-2,3-dihydroxy-3-methylbutanoate = 3-methyl-2-oxobutanoate + H2O. The catalysed reaction is (2R,3R)-2,3-dihydroxy-3-methylpentanoate = (S)-3-methyl-2-oxopentanoate + H2O. Its pathway is amino-acid biosynthesis; L-isoleucine biosynthesis; L-isoleucine from 2-oxobutanoate: step 3/4. It participates in amino-acid biosynthesis; L-valine biosynthesis; L-valine from pyruvate: step 3/4. Functions in the biosynthesis of branched-chain amino acids. Catalyzes the dehydration of (2R,3R)-2,3-dihydroxy-3-methylpentanoate (2,3-dihydroxy-3-methylvalerate) into 2-oxo-3-methylpentanoate (2-oxo-3-methylvalerate) and of (2R)-2,3-dihydroxy-3-methylbutanoate (2,3-dihydroxyisovalerate) into 2-oxo-3-methylbutanoate (2-oxoisovalerate), the penultimate precursor to L-isoleucine and L-valine, respectively. This chain is Dihydroxy-acid dehydratase, found in Phocaeicola vulgatus (strain ATCC 8482 / DSM 1447 / JCM 5826 / CCUG 4940 / NBRC 14291 / NCTC 11154) (Bacteroides vulgatus).